The sequence spans 181 residues: Probable nicotinate-nucleotide adenylyltransferase (181 aa).

Belongs to the NadD family.

It catalyses the reaction nicotinate beta-D-ribonucleotide + ATP + H(+) = deamido-NAD(+) + diphosphate. It participates in cofactor biosynthesis; NAD(+) biosynthesis; deamido-NAD(+) from nicotinate D-ribonucleotide: step 1/1. Functionally, catalyzes the reversible adenylation of nicotinate mononucleotide (NaMN) to nicotinic acid adenine dinucleotide (NaAD). This chain is Probable nicotinate-nucleotide adenylyltransferase, found in Campylobacter fetus subsp. fetus (strain 82-40).